A 351-amino-acid polypeptide reads, in one-letter code: Uroporphyrinogen decarboxylase (351 aa).

Residues 27-31 (RQAGR), Asp-77, Tyr-154, Thr-209, and His-327 each bind substrate.

Belongs to the uroporphyrinogen decarboxylase family. In terms of assembly, homodimer.

The protein resides in the cytoplasm. The catalysed reaction is uroporphyrinogen III + 4 H(+) = coproporphyrinogen III + 4 CO2. The protein operates within porphyrin-containing compound metabolism; protoporphyrin-IX biosynthesis; coproporphyrinogen-III from 5-aminolevulinate: step 4/4. Catalyzes the decarboxylation of four acetate groups of uroporphyrinogen-III to yield coproporphyrinogen-III. The sequence is that of Uroporphyrinogen decarboxylase from Thioalkalivibrio sulfidiphilus (strain HL-EbGR7).